We begin with the raw amino-acid sequence, 379 residues long: Leukocyte elastase inhibitor A (379 aa).

Residue Ser-300 is modified to Phosphoserine.

This sequence belongs to the serpin family. Ov-serpin subfamily. In terms of assembly, monomer.

It localises to the secreted. It is found in the cytoplasm. Its subcellular location is the cytolytic granule. The protein resides in the early endosome. Its function is as follows. Regulates the activity of the neutrophil proteases. The sequence is that of Leukocyte elastase inhibitor A (Serpinb1a) from Rattus norvegicus (Rat).